We begin with the raw amino-acid sequence, 286 residues long: Aquaporin PIP1-1 (286 aa).

A disordered region spans residues 1 to 34 (MEGKEEDVRLGANKFSERQPIGTAAQSDKGYKEP). Residues 1–54 (MEGKEEDVRLGANKFSERQPIGTAAQSDKGYKEPPPAPLFEPGELTSWSFYRAG) lie on the Cytoplasmic side of the membrane. A helical transmembrane segment spans residues 55-75 (IAEFMATFLFLYITILTVMGV). Residues 76-88 (VKSNSKCSTVGIQ) are Extracellular-facing. A helical transmembrane segment spans residues 89–109 (GIAWAFGGMIFALVYCTAGIS). Topologically, residues 110–131 (GGHINPAVTFGLFLARKLSLTR) are cytoplasmic. The NPA 1 motif lies at 114–116 (NPA). The helical transmembrane segment at 132–152 (ALFYMVMQCLGAICGAGVVKG) threads the bilayer. Topologically, residues 153–174 (YQKGLYESNGGGANVVAPGYTK) are extracellular. A helical membrane pass occupies residues 175–195 (GDGLGAEIVGTFILVYTVFSA). The Cytoplasmic segment spans residues 196-208 (TDAKRNARDSHVP). The chain crosses the membrane as a helical span at residues 209 to 229 (ILAPLPIGFAVFLVHLATIPI). Topologically, residues 230–256 (TGTGINPARSLGAAIIYNKKHAWDDHW) are extracellular. Positions 235-237 (NPA) match the NPA 2 motif. A helical membrane pass occupies residues 257-277 (IFWVGPFIGAALAAIYHQIVI). Residues 278-286 (RAIPFKSRP) lie on the Cytoplasmic side of the membrane.

This sequence belongs to the MIP/aquaporin (TC 1.A.8) family. PIP (TC 1.A.8.11) subfamily. Expressed in leaves, roots, stems, flowers and fruits, with highest levels in roots.

The protein localises to the cell membrane. Its function is as follows. Water channel required to facilitate the transport of water across cell membrane; mercury-insensitive. Promotes primary root elongation and root hair formation. Contributes to the tolerance to multiple abiotic stresses including salt (NaCl), cold and water deprivation, by modulating cytosolic K(+)/Na(+) ratio, maintaining osmotic balance, and reducing membrane injury (e.g. oxidative injury). Also regulates the expression of abscisic acid (ABA)-responsive genes during dehydration and salt stresses. The sequence is that of Aquaporin PIP1-1 from Musa acuminata (Banana).